Here is a 215-residue protein sequence, read N- to C-terminus: Penicillin-binding protein activator LpoB (215 aa).

Residues 1 to 19 (MMKMCRYALITALAIFLAG) form the signal peptide. A lipid anchor (N-palmitoyl cysteine) is attached at Cys-20. A lipid anchor (S-diacylglycerol cysteine) is attached at Cys-20. A disordered region spans residues 28–78 (APVEEAKPQPQQPAQPQPTVPTVPAVPSVPAQPGPIEHQDQQSGQPAPRVR). Over residues 37-48 (PQQPAQPQPTVP) the composition is skewed to pro residues. Positions 49 to 58 (TVPAVPSVPA) are enriched in low complexity.

It belongs to the LpoB family. As to quaternary structure, interacts with PBP1b.

The protein resides in the cell outer membrane. Regulator of peptidoglycan synthesis that is essential for the function of penicillin-binding protein 1B (PBP1b). This Klebsiella pneumoniae subsp. pneumoniae (strain ATCC 700721 / MGH 78578) protein is Penicillin-binding protein activator LpoB.